The chain runs to 394 residues: Elongation factor Tu 2 (394 aa).

The region spanning 9-204 (KPHCNIGTIG…SIDDYIPQPT (196 aa)) is the tr-type G domain. The G1 stretch occupies residues 18-25 (GHVDHGKT). 18-25 (GHVDHGKT) contacts GTP. T25 serves as a coordination point for Mg(2+). Residues 61-65 (GITIQ) are G2. The segment at 82–85 (DCPG) is G3. GTP-binding positions include 82-86 (DCPGH) and 137-140 (NKID). The segment at 137–140 (NKID) is G4. A G5 region spans residues 174–176 (SAL).

This sequence belongs to the TRAFAC class translation factor GTPase superfamily. Classic translation factor GTPase family. EF-Tu/EF-1A subfamily. Monomer.

The protein resides in the cytoplasm. The enzyme catalyses GTP + H2O = GDP + phosphate + H(+). GTP hydrolase that promotes the GTP-dependent binding of aminoacyl-tRNA to the A-site of ribosomes during protein biosynthesis. The polypeptide is Elongation factor Tu 2 (Orientia tsutsugamushi (strain Boryong) (Rickettsia tsutsugamushi)).